A 290-amino-acid chain; its full sequence is Hsp70 nucleotide exchange factor FES1 (290 aa).

Phosphoserine is present on S12. ARM repeat units lie at residues 13-57 (QGDK…NPEV), 76-116 (LDNA…TAVQ), 120-161 (DSQN…NLIR), 164-205 (KDIS…AYLS), 211-251 (ENII…HLIS), and 253-290 (GIKFNEQELHKLNEGYKHIEPLKDRLNEDDYLAVKYVL).

It belongs to the FES1 family. As to quaternary structure, interacts with the Hsp70 chaperones SSA1 and SSB1.

The protein resides in the cytoplasm. Involved in protein translation, propagation of [PSI+] prions, and polyamine tolerance. Functions as a nucleotide exchange factor (NEF), which accelerates the release of ADP, for the cytosolic Hsp70 chaperone SSA1 and the ribosome-associated Hsp70 chaperone SSB1. Required for fully efficient Hsp70-mediated folding of proteins. In Saccharomyces cerevisiae (strain ATCC 204508 / S288c) (Baker's yeast), this protein is Hsp70 nucleotide exchange factor FES1 (FES1).